Here is a 452-residue protein sequence, read N- to C-terminus: Probable ECA polymerase (452 aa).

Helical transmembrane passes span 6–26, 37–57, 63–83, 118–138, 155–175, 181–201, 207–227, 228–248, 341–361, 378–398, and 410–430; these read FSGLLVVWLLSTLFIATLTWF, VFFSLLFLLTFFFGFPLTSVL, VGVAPPEILLQALLSAACFYG, VILMGIALVSVAIFFMHNGFL, GVALKRFFYFFIPAMLVVYFL, AWLFFLVSTVAFGLLTYMIVG, IIIAFAIFLFIGIIRGWISLW, MLAAAGVLGIVGMFWLALKRY, LVVMGGALFIPLGAIVVGLII, YKAAILHSFCFGAIFNMIVLV, and VFFLVVFGASLLVAKLLFWLF.

It belongs to the WzyE family. Probably part of a complex composed of WzxE, WzyE and WzzE.

It localises to the cell inner membrane. Its pathway is bacterial outer membrane biogenesis; enterobacterial common antigen biosynthesis. In terms of biological role, probably involved in the polymerization of enterobacterial common antigen (ECA) trisaccharide repeat units. This is Probable ECA polymerase from Salmonella gallinarum (strain 287/91 / NCTC 13346).